The following is a 944-amino-acid chain: Protein unc-45 homolog A (944 aa).

A disordered region spans residues 1–25; it reads MTVSGPETPEPRPSDPGASSAEQLR. TPR repeat units lie at residues 21-54, 58-91, and 92-125; these read AEQL…GATP, AILH…DGGD, and VKAL…EPKN. An N6-acetyllysine modification is found at lysine 70. At lysine 483 the chain carries N6-acetyllysine.

As to quaternary structure, interacts with PGR isoforms A and B as well as with NR3C1 in the absence of ligand, and with HSP90AB1. Binding to HSP90AB1 involves 2 UNC45A monomers per HSP90AB1 dimer. As to expression, detected in spleen, bone marrow, lung and ovary, and at lower levels in testis, kidney, heart and brain (at protein level). Ubiquitous. Detected in uterus, large intestine, kidney, spleen, lung, brain, liver and ovary.

Its subcellular location is the cytoplasm. It is found in the perinuclear region. The protein resides in the nucleus. Its function is as follows. May act as co-chaperone for HSP90 (Potential). Prevents the stimulation of HSP90AB1 ATPase activity by AHSA1. Positive factor in promoting PGR function in the cell. May be necessary for proper folding of myosin (Potential). Necessary for normal cell proliferation. Necessary for normal myotube formation and myosin accumulation during muscle cell development. May play a role in erythropoiesis in stroma cells in the spleen. The chain is Protein unc-45 homolog A (Unc45a) from Mus musculus (Mouse).